Consider the following 390-residue polypeptide: GTPase Obg (390 aa).

The region spanning 1–159 (MKFVDEASIL…RELLLELMLL (159 aa)) is the Obg domain. Residues 127–147 (NTRFKSSVNRTPRQKTNGTPG) are disordered. Residues 129-145 (RFKSSVNRTPRQKTNGT) are compositionally biased toward polar residues. The 174-residue stretch at 160 to 333 (ADVGMLGMPN…LCWDVMTFII (174 aa)) folds into the OBG-type G domain. GTP-binding positions include 166 to 173 (GMPNAGKS), 191 to 195 (FTTLV), 213 to 216 (DIPG), 283 to 286 (NKID), and 314 to 316 (SAA). Mg(2+) is bound by residues S173 and T193.

The protein belongs to the TRAFAC class OBG-HflX-like GTPase superfamily. OBG GTPase family. In terms of assembly, monomer. It depends on Mg(2+) as a cofactor.

The protein resides in the cytoplasm. An essential GTPase which binds GTP, GDP and possibly (p)ppGpp with moderate affinity, with high nucleotide exchange rates and a fairly low GTP hydrolysis rate. Plays a role in control of the cell cycle, stress response, ribosome biogenesis and in those bacteria that undergo differentiation, in morphogenesis control. The chain is GTPase Obg from Escherichia fergusonii (strain ATCC 35469 / DSM 13698 / CCUG 18766 / IAM 14443 / JCM 21226 / LMG 7866 / NBRC 102419 / NCTC 12128 / CDC 0568-73).